We begin with the raw amino-acid sequence, 884 residues long: Probable disease resistance protein At1g12290 (884 aa).

Positions leucine 26–glutamine 66 form a coiled coil. The region spanning alanine 139–asparagine 443 is the NB-ARC domain. Glycine 182–threonine 189 is a binding site for ATP. LRR repeat units lie at residues valine 519 to proline 540, lysine 541 to serine 563, arginine 566 to leucine 588, serine 590 to lysine 612, lysine 613 to serine 635, and asparagine 644 to glutamate 664.

It belongs to the disease resistance NB-LRR family.

Probable disease resistance protein. The protein is Probable disease resistance protein At1g12290 of Arabidopsis thaliana (Mouse-ear cress).